The sequence spans 842 residues: Unconventional myosin-Ia (842 aa).

Positions 1 to 686 (GVEDLILLEP…TLFYLEEQRR (686 aa)) constitute a Myosin motor domain. ATP is bound at residue 93 to 100 (GESGAGKT). An actin-binding region spans residues 563–585 (VAILMKNLYSKNPNYIRCIKPND). IQ domains are found at residues 689–712 (LQQL…YQQM), 713–733 (RKSQ…KHYG), and 735–764 (IRSS…SGAR).

It belongs to the TRAFAC class myosin-kinesin ATPase superfamily. Myosin family. Phosphorylated by ALPK1.

Involved in directing the movement of organelles along actin filaments. This chain is Unconventional myosin-Ia (Myo1a), found in Rattus norvegicus (Rat).